The following is a 115-amino-acid chain: Meiotically up-regulated gene 42 protein (115 aa).

Has a role in meiosis. This is Meiotically up-regulated gene 42 protein (mug42) from Schizosaccharomyces pombe (strain 972 / ATCC 24843) (Fission yeast).